We begin with the raw amino-acid sequence, 254 residues long: uncharacterized protein (254 aa).

Belongs to the methyltransferase superfamily.

This is an uncharacterized protein from Mycobacterium tuberculosis (strain ATCC 25177 / H37Ra).